Here is a 295-residue protein sequence, read N- to C-terminus: Protoheme IX farnesyltransferase (295 aa).

Residues 1–9 (MSVKHFIQI) lie on the Cytoplasmic side of the membrane. Residues 10–28 (TKPGIIFGNVLSVAGGFFL) traverse the membrane as a helical segment. Residues 29 to 37 (ASKGHVDFA) are Periplasmic-facing. A helical membrane pass occupies residues 38 to 56 (LFLAVVIGTSLVVASGCVF). Residues 57 to 78 (NNCIDRDIDHKMERTKNRVMVQ) lie on the Cytoplasmic side of the membrane. A helical membrane pass occupies residues 79 to 97 (GGMSLPLALIYATLLGVAG). The Periplasmic segment spans residues 98–107 (FSLLYVQANP). The helical transmembrane segment at 108–126 (LSAFCALIGFIVYVGFYSL) threads the bilayer. Topologically, residues 127–197 (WLKRKSVHGT…YSAANIPVLP (71 aa)) are cytoplasmic. The helical transmembrane segment at 198–216 (VARGILAAKKQIVLYVLAF) threads the bilayer. The Periplasmic portion of the chain corresponds to 217 to 228 (VLATLMLTLGGY). The helical transmembrane segment at 229 to 247 (AGLGYLAVAAAMGLYWLYM) threads the bilayer. At 248–268 (AWGGYKAEDDSKWARKVFGFS) the chain is on the cytoplasmic side. The chain crosses the membrane as a helical span at residues 269–287 (ILTVTALSVMMGVDSQTAA). The Periplasmic portion of the chain corresponds to 288-295 (DVLMTYAR).

The protein belongs to the UbiA prenyltransferase family. Mg(2+) is required as a cofactor. Ca(2+) serves as cofactor.

It is found in the cell inner membrane. It carries out the reaction heme b + (2E,6E)-farnesyl diphosphate + H2O = Fe(II)-heme o + diphosphate. Functionally, converts protoheme IX and farnesyl diphosphate to heme O. This Pseudomonas putida (Arthrobacter siderocapsulatus) protein is Protoheme IX farnesyltransferase (cyoE).